Here is a 548-residue protein sequence, read N- to C-terminus: Glucose-6-phosphate isomerase (548 aa).

Glutamate 353 acts as the Proton donor in catalysis. Active-site residues include histidine 384 and lysine 512.

The protein belongs to the GPI family.

The protein localises to the cytoplasm. The enzyme catalyses alpha-D-glucose 6-phosphate = beta-D-fructose 6-phosphate. It functions in the pathway carbohydrate biosynthesis; gluconeogenesis. The protein operates within carbohydrate degradation; glycolysis; D-glyceraldehyde 3-phosphate and glycerone phosphate from D-glucose: step 2/4. Functionally, catalyzes the reversible isomerization of glucose-6-phosphate to fructose-6-phosphate. This Chlorobium chlorochromatii (strain CaD3) protein is Glucose-6-phosphate isomerase.